We begin with the raw amino-acid sequence, 551 residues long: MSAKEIKFGQDARSLILSGVNQLADAVKVTLGPKGRNVVIDRSFGAPLITKDGVSVAKEIELEEKFENMGAQLVKEVASKTSDVAGDGTTTATVLAQGIYREGVKLVTAGHNPMEIKRGIDKAVEAAVAYLQELSKPIKDHKEIAQVGTISANSDKTIGDIIAEAMEKVGKEGVITVEEAKAMETSLETVEGMQFDRGYLSPYFVTDAERMEAVMEDAMILIHDKKISNMRDMINILEAVAKQGRPLLIIAEDIEGEALATLVVNRLRGTLNVAAVKAPGFGDRRKAMLEDIAILTGGKVISEEVGFKLENATIDMLGNAKRIVIDKENSTIIDGAGSEVDIQGRVKQIRAQIEETKSDYDREKLQERLAKLVGGVAVVKVGAATETEMKEKKARVEDALHATRAAVEEGIVPGGGVALIRCIKAIESLDLPGEQNWGVNIVKRAMEEPLRQISANAGAEGSIVVNQVRGGADTYGFNAAADEYCDMIEAGIIDPTKVVRSALQNASSVAGLMLTTEACIAELPKEEAGGGMPGGMPGGMPGGMGGMGGMM.

ATP is bound by residues 30-33, Lys51, 87-91, Gly415, 478-480, and Asp494; these read TLGP, DGTTT, and NAA.

Belongs to the chaperonin (HSP60) family. As to quaternary structure, forms a cylinder of 14 subunits composed of two heptameric rings stacked back-to-back. Interacts with the co-chaperonin GroES.

Its subcellular location is the cytoplasm. The enzyme catalyses ATP + H2O + a folded polypeptide = ADP + phosphate + an unfolded polypeptide.. In terms of biological role, together with its co-chaperonin GroES, plays an essential role in assisting protein folding. The GroEL-GroES system forms a nano-cage that allows encapsulation of the non-native substrate proteins and provides a physical environment optimized to promote and accelerate protein folding. This chain is Chaperonin GroEL, found in Syntrophotalea carbinolica (strain DSM 2380 / NBRC 103641 / GraBd1) (Pelobacter carbinolicus).